A 176-amino-acid polypeptide reads, in one-letter code: Neuropeptide-like protein 1 (176 aa).

The first 19 residues, 1–19, serve as a signal peptide directing secretion; that stretch reads MKATFVLACLLVIAAVSHA. The tract at residues 59 to 79 is disordered; sequence GKRSAEQNEQANKEDKATSDK. Over residues 61 to 79 the composition is skewed to basic and acidic residues; it reads RSAEQNEQANKEDKATSDK.

Functionally, in AWC olfactory sensory neurons, required for the detection of preferred food sources. The protein is Neuropeptide-like protein 1 (nlp-1) of Caenorhabditis elegans.